The sequence spans 128 residues: uncharacterized protein (128 aa).

This is an uncharacterized protein from Botryotinia fuckeliana (Noble rot fungus).